Reading from the N-terminus, the 747-residue chain is Protein MTSS 2 (747 aa).

Positions 1–252 (METAEKECGA…EQVIKDLKGS (252 aa)) constitute an IMD domain. Residues 135 to 159 (EIKKKSSDTLKLQKKARKELLGKGD) adopt a coiled-coil conformation. Composition is skewed to low complexity over residues 256 to 284 (WSYQ…SSSS), 321 to 332 (SSVSSHDSGFVS), and 349 to 367 (TSQK…TCQS). Disordered stretches follow at residues 256-302 (WSYQ…YSPS), 318-441 (ARLS…EEVS), 457-522 (LEHQ…RNSN), and 543-599 (PTAG…PTVP). Phosphothreonine is present on threonine 260. The residue at position 264 (serine 264) is a Phosphoserine. Residues 368–378 (VSECSSPTSDW) show a composition bias toward polar residues. The span at 397 to 406 (DRVELLRDTE) shows a compositional bias: basic and acidic residues. Residue serine 441 is modified to Phosphoserine. A compositionally biased stretch (low complexity) spans 466-479 (SLQYSSGYSTQTTT). A compositionally biased stretch (polar residues) spans 480 to 492 (PSCSEDTIPSQGS). Phosphoserine occurs at positions 579, 601, 612, 624, 634, and 639. Disordered regions lie at residues 638–664 (LSLP…EDEQ) and 691–720 (GQFP…DPPA). Threonine 643 bears the Phosphothreonine mark. Composition is skewed to low complexity over residues 646-659 (GSPS…PGAG) and 696-707 (PTALSATPTEET). In terms of domain architecture, WH2 spans 719–736 (PAEDMLVAIRRGVRLRRT).

The protein belongs to the MTSS family. Interacts (via IMD domain) with RAC1; this interaction may be important to potentiate PDGF-induced RAC1 activation.

It is found in the cytoplasm. Its subcellular location is the cell projection. It localises to the ruffle. Its function is as follows. Involved in plasma membrane dynamics. Potentiated PDGF-mediated formation of membrane ruffles and lamellipodia in fibroblasts, acting via RAC1 activation. May function in actin bundling. The chain is Protein MTSS 2 from Homo sapiens (Human).